The following is a 778-amino-acid chain: Arf-GAP with coiled-coil, ANK repeat and PH domain-containing protein 2 (778 aa).

Residues 1–226 (MKMTVDFEEC…MKDLGAQLDR (226 aa)) form the BAR domain. The PH domain maps to 266-361 (GIVMEGYLFK…WIKAVQTSIA (96 aa)). A disordered region spans residues 371–391 (SEKLDKKSSPSTGSLDSGNES). Positions 379-388 (SPSTGSLDSG) are enriched in polar residues. Residues S384 and S387 each carry the phosphoserine modification. The Arf-GAP domain occupies 399 to 520 (ESALQRVQCV…KFVDKYSVSS (122 aa)). The C4-type zinc-finger motif lies at 414–437 (CCDCGLADPRWASINLGITLCIEC). The disordered stretch occupies residues 518–596 (VSSSPPEQEK…EPEGERQDSS (79 aa)). Residue S521 is modified to Phosphoserine. Basic and acidic residues predominate over residues 524–539 (EQEKKVVSKDSEEKRL). Polar residues predominate over residues 550-569 (VRTSIQSSVKSNDSGIQQSS). Phosphoserine is present on residues S581 and S584. 3 ANK repeats span residues 640-669 (NKAT…NVNQ), 673-702 (QGRG…NQHA), and 706-735 (EGKD…NEEM). Y742 is modified (phosphotyrosine). A Phosphoserine modification is found at S775.

In terms of assembly, interacts with RAB35 (GTP-bound form); the interaction is direct and probably recruits ACAP2 to membranes. Interacts with MICALL1; the interaction is indirect through RAB35.

It is found in the endosome membrane. The protein resides in the cell membrane. Its activity is regulated as follows. GAP activity stimulated by phosphatidylinositol 4,5-bisphosphate (PIP2) and phosphatidic acid. Its function is as follows. GTPase-activating protein (GAP) for ADP ribosylation factor 6 (ARF6). Doesn't show GAP activity for RAB35. This is Arf-GAP with coiled-coil, ANK repeat and PH domain-containing protein 2 (ACAP2) from Oryctolagus cuniculus (Rabbit).